A 286-amino-acid chain; its full sequence is Alpha-ketoglutarate-dependent dioxygenase alkB homolog 3 (286 aa).

Residues 1–46 (MEDKRQRARVQGGWATPTKSQSATQPASPARSRLSQTAGPAWRSKE) form a disordered region. Polar residues predominate over residues 17 to 38 (PTKSQSATQPASPARSRLSQTA). Substrate-binding positions include W115 and 141–143 (YTY). The region spanning 172–278 (TFNSLLCNFY…RVNLTFRTVY (107 aa)) is the Fe2OG dioxygenase domain. L177 bears the (4R)-5-hydroxyleucine; alternate mark. L177 is modified ((4R)-5-oxoleucine; alternate). 179–181 (NFY) is a binding site for 2-oxoglutarate. Positions 191 and 193 each coordinate Fe cation. Substrate is bound at residue D194. Fe cation is bound at residue H257. Residues 269–275 (RVNLTFR) and R275 each bind 2-oxoglutarate.

Belongs to the alkB family. In terms of assembly, interacts with the ASCC complex composed of ASCC1, ASCC2 and ASCC3. Interacts directly with ASCC3, and is thereby recruited to the ASCC complex. Interacts with OTUD4; the interaction is direct. Interacts with USP7 and USP9X. Fe(2+) serves as cofactor. Post-translationally, ubiquitinated; undergoes 'Lys-48'-linked polyubiquitination. OTUD4 promotes USP7 and USP9X-dependent deubiquitination of 'Lys-48'-polyubiquitinated ALKBH3 promoting the repair of alkylated DNA lesions. As to expression, detected in testis, kidney, liver and heart.

It is found in the nucleus. The protein resides in the cytoplasm. It carries out the reaction an N(1)-methyladenosine in mRNA + 2-oxoglutarate + O2 = an adenosine in mRNA + formaldehyde + succinate + CO2. The enzyme catalyses a methylated nucleobase within DNA + 2-oxoglutarate + O2 = a nucleobase within DNA + formaldehyde + succinate + CO2. The catalysed reaction is an N(1)-methyl-2'-deoxyadenosine in single-stranded DNA + 2-oxoglutarate + O2 = a 2'-deoxyadenosine in single-stranded DNA + formaldehyde + succinate + CO2 + H(+). It catalyses the reaction an N(3)-methyl-2'-deoxycytidine in single-stranded DNA + 2-oxoglutarate + O2 = a 2'-deoxycytidine in single-stranded DNA + formaldehyde + succinate + CO2 + H(+). It carries out the reaction a 3,N(4)-etheno-2'-deoxycytidine in single-stranded DNA + 2-oxoglutarate + O2 + H2O = a 2'-deoxycytidine in single-stranded DNA + glyoxal + succinate + CO2. Its activity is regulated as follows. Activated by ascorbate. Dioxygenase that mediates demethylation of DNA and RNA containing 1-methyladenosine (m1A). Repairs alkylated DNA containing 1-methyladenosine (m1A) and 3-methylcytosine (m3C) by oxidative demethylation. Has a strong preference for single-stranded DNA. Able to process alkylated m3C within double-stranded regions via its interaction with ASCC3, which promotes DNA unwinding to generate single-stranded substrate needed for ALKBH3. Can repair exocyclic 3,N4-ethenocytosine adducs in single-stranded DNA. Also acts on RNA. Demethylates N(1)-methyladenosine (m1A) RNA, an epigenetic internal modification of messenger RNAs (mRNAs) highly enriched within 5'-untranslated regions (UTRs) and in the vicinity of start codons. Requires molecular oxygen, alpha-ketoglutarate and iron. In Mus musculus (Mouse), this protein is Alpha-ketoglutarate-dependent dioxygenase alkB homolog 3.